The chain runs to 628 residues: Protein SDS23 (628 aa).

Residues 1 to 126 (MVNPPQPRQM…NKSSSQSIAP (126 aa)) are disordered. The segment covering 15–24 (RLSTSTSSGP) has biased composition (polar residues). 2 stretches are compositionally biased toward low complexity: residues 40–71 (QLQH…PGST) and 109–123 (SRHA…SSQS). CBS domains follow at residues 258–319 (LHPK…RFPS) and 334–392 (GSSN…SHLL). Residues 551–609 (GRRTDPQAARNQRRRSSTSTTRSSIDSALSAEGILPSGSAIIGSSNAANTGRRGSVEVS) are disordered. A compositionally biased stretch (low complexity) spans 587–599 (SGSAIIGSSNAAN).

The protein belongs to the SDS23 family.

It localises to the cytoplasm. Its subcellular location is the nucleus. Functionally, involved in DNA replication and cell separation. The sequence is that of Protein SDS23 (SDS24) from Candida albicans (strain SC5314 / ATCC MYA-2876) (Yeast).